Reading from the N-terminus, the 285-residue chain is Probable endonuclease 4 (285 aa).

Zn(2+) is bound by residues histidine 68, histidine 108, glutamate 145, aspartate 179, histidine 182, histidine 216, aspartate 229, histidine 231, and glutamate 261.

This sequence belongs to the AP endonuclease 2 family. Zn(2+) serves as cofactor.

It carries out the reaction Endonucleolytic cleavage to 5'-phosphooligonucleotide end-products.. In terms of biological role, endonuclease IV plays a role in DNA repair. It cleaves phosphodiester bonds at apurinic or apyrimidinic (AP) sites, generating a 3'-hydroxyl group and a 5'-terminal sugar phosphate. In Geotalea daltonii (strain DSM 22248 / JCM 15807 / FRC-32) (Geobacter daltonii), this protein is Probable endonuclease 4.